We begin with the raw amino-acid sequence, 637 residues long: Rab11 family-interacting protein 4 (637 aa).

In terms of domain architecture, EF-hand spans 49–84 (GQGEEVEKLVKYLDPNDLGRINFKDFCRGVFAMKGC). Ca(2+) contacts are provided by Asp-62, Asn-64, Arg-68, and Asp-73. A necessary for interaction with RAB11A, subcellular location, homo- or heterooligomerization region spans residues 82-637 (KGCEELLKDV…HNPSILEIKH (556 aa)). 2 disordered regions span residues 138–175 (EEEA…PAEK) and 219–256 (YGEG…SAGQ). The stretch at 280–617 (KINLLNDLEA…EEINFRLRQY (338 aa)) forms a coiled coil. An FIP-RBD domain is found at 574-636 (EAKNLFAAQT…DHNPSILEIK (63 aa)).

Homodimer. Forms a complex with Rab11 (RAB11A or RAB11B) and ARF6. Interacts with RAB11A; the interaction is direct. Forms a heterooligomeric complex with RAB11FIP2, RAB11FIP3 and RAB11FIP5. Interacts with ECPAS. In terms of assembly, (Microbial infection) Interacts with human cytomegalovirus/HHV-5 protein gM/UL100. As to expression, present at high level in testis (at protein level). Weakly expressed in other tissues.

Its subcellular location is the endosome. The protein resides in the cytoplasm. The protein localises to the cytoskeleton. It is found in the spindle. It localises to the microtubule organizing center. Its subcellular location is the centrosome. The protein resides in the recycling endosome membrane. The protein localises to the cleavage furrow. It is found in the midbody. It localises to the cytoplasmic vesicle. Functionally, acts as a regulator of endocytic traffic by participating in membrane delivery. Required for the abscission step in cytokinesis, possibly by acting as an 'address tag' delivering recycling endosome membranes to the cleavage furrow during late cytokinesis. In case of infection by HCMV (human cytomegalovirus), may participate in egress of the virus out of nucleus; this function is independent of ARF6. This is Rab11 family-interacting protein 4 (RAB11FIP4) from Homo sapiens (Human).